A 322-amino-acid chain; its full sequence is NADH-cytochrome b5 reductase 2 (322 aa).

The helical transmembrane segment at 31-48 (LAPIYAAVGITGVGVGLY) threads the bilayer. The FAD-binding FR-type domain occupies 72–176 (QGWFDLKLSE…KGPIVKYPWE (105 aa)). Residue 179–214 (KHNHICLIAGGTGITPMYQLAREIFKNPEDQTKVTL) coordinates FAD.

The protein belongs to the flavoprotein pyridine nucleotide cytochrome reductase family. The cofactor is FAD.

It localises to the mitochondrion outer membrane. It carries out the reaction 2 Fe(III)-[cytochrome b5] + NADH = 2 Fe(II)-[cytochrome b5] + NAD(+) + H(+). May mediate the reduction of outer membrane cytochrome b5. This Aspergillus niger (strain ATCC MYA-4892 / CBS 513.88 / FGSC A1513) protein is NADH-cytochrome b5 reductase 2 (mcr1).